Consider the following 202-residue polypeptide: Crustacean calcium-binding protein 23 (202 aa).

At S1 the chain carries N-acetylserine. 4 consecutive EF-hand domains span residues 33 to 68 (SGLLSLGRLFRRLDKDRSWTLSKEELSRGVGQFGLD), 69 to 104 (LSDGDINKLFSSFEKDGQSGINYEEFLESLRPEMTE), 105 to 140 (PRKKAVEAAFKHLDKTGDGVVGLEDIKGKYSAKTHP), and 148 to 185 (TEDEILKKFLNMFETNTSVDGKVTKKEFFDYYSGLSKA). 5 residues coordinate Ca(2+): D84, E93, D118, D122, and D129.

In terms of assembly, monomer or disulfide-linked dimers. Striated muscle and brain.

Possibly acts as a regulatory protein and not as a calcium buffer or transport protein. This is Crustacean calcium-binding protein 23 from Faxonius limosus (Spinycheek crayfish).